The sequence spans 412 residues: Protein arginine N-methyltransferase 2 (412 aa).

Residues 48 to 65 show a composition bias toward basic and acidic residues; sequence EKNRNGDKEFRESTDDNK. Disordered stretches follow at residues 48-69 and 169-189; these read EKNR…TSNT and SVQT…DDAT. 2 positions are modified to phosphoserine: serine 181 and serine 184. One can recognise an RMT2 domain in the interval 189–412; sequence TAANQQVYLK…YYYHPRITFA (224 aa). S-adenosyl-L-methionine-binding positions include tyrosine 196, methionine 226, 250 to 255, 271 to 273, 298 to 299, and aspartate 319; these read FGMGII, EAH, and WQ.

The protein belongs to the class I-like SAM-binding methyltransferase superfamily. RMT2 methyltransferase family. In terms of assembly, monomer. Interacts with nucleoporins NUP49, NUP57 and NUP100.

The protein resides in the cytoplasm. Its subcellular location is the nucleus. In terms of biological role, S-adenosyl-L-methionine-dependent protein-arginine N-methyltransferase that methylates the delta-nitrogen atom of arginine residues to form N5-methylarginine (type IV) in target proteins. Monomethylates ribosomal protein L12 (RPL12A/RPL12B) at 'Arg-67'. The sequence is that of Protein arginine N-methyltransferase 2 from Saccharomyces cerevisiae (strain ATCC 204508 / S288c) (Baker's yeast).